A 281-amino-acid chain; its full sequence is Pantothenate synthetase (281 aa).

Residue 30–37 (MGYLHEGH) participates in ATP binding. His-37 acts as the Proton donor in catalysis. (R)-pantoate is bound at residue Gln-61. Residue Gln-61 coordinates beta-alanine. Residue 147-150 (GQKD) coordinates ATP. Gln-153 is a binding site for (R)-pantoate. ATP is bound by residues Val-176 and 184–187 (MSSR).

This sequence belongs to the pantothenate synthetase family. In terms of assembly, homodimer.

It is found in the cytoplasm. It carries out the reaction (R)-pantoate + beta-alanine + ATP = (R)-pantothenate + AMP + diphosphate + H(+). Its pathway is cofactor biosynthesis; (R)-pantothenate biosynthesis; (R)-pantothenate from (R)-pantoate and beta-alanine: step 1/1. In terms of biological role, catalyzes the condensation of pantoate with beta-alanine in an ATP-dependent reaction via a pantoyl-adenylate intermediate. This Acetivibrio thermocellus (strain ATCC 27405 / DSM 1237 / JCM 9322 / NBRC 103400 / NCIMB 10682 / NRRL B-4536 / VPI 7372) (Clostridium thermocellum) protein is Pantothenate synthetase.